A 965-amino-acid chain; its full sequence is Calsyntenin-2 (965 aa).

A signal peptide spans 1-20; that stretch reads MLPGRLCLVPLLLALGVGSG. The Extracellular portion of the chain corresponds to 21–835; that stretch reads GGSGDGGDSR…SIQRSSVVPS (815 aa). Cadherin domains lie at 46 to 162 and 163 to 282; these read IETS…APTF and KEPA…MPLF. N58 and N100 each carry an N-linked (GlcNAc...) asparagine glycan. Residues N344, N376, N720, and N733 are each glycosylated (N-linked (GlcNAc...) asparagine). Residues 836-856 traverse the membrane as a helical segment; the sequence is IATVVIIISVCMLVFVVAMGV. The Cytoplasmic segment spans residues 857–965; that stretch reads YRVRIAHQHF…NTAGVINIWK (109 aa). The segment at 891-965 is disordered; that stretch reads PMEKHEGPGH…NTAGVINIWK (75 aa). Basic and acidic residues predominate over residues 892–902; that stretch reads MEKHEGPGHGE. Acidic residues predominate over residues 903 to 915; that stretch reads DETEGEEEEEAEE. The span at 942 to 959 shows a compositional bias: polar residues; sequence QSGTSSQRPERSTWNTAG.

The protein belongs to the calsyntenin family. Proteolytically processed under normal cellular conditions. A primary zeta-cleavage generates a large extracellular (soluble) N-terminal domain (sAlc) and a short C-terminal transmembrane fragment (CTF1). A secondary cleavage catalyzed by gamma-secretase within the transmembrane domain releases the beta-Alc-gamma chain in the extracellular milieu and produces an intracellular fragment (AlcICD). This processing is strongly suppressed in the tripartite complex formed with APBA2 and APP, which seems to prevent the association with PSEN1.

It is found in the postsynaptic cell membrane. Its subcellular location is the endoplasmic reticulum membrane. The protein resides in the golgi apparatus membrane. The protein localises to the cell projection. It localises to the dendrite. Functionally, postsynaptic adhesion molecule that binds to presynaptic neurexins to mediate synapse formation, and which is involved in learning and memory. Promotes synapse development by acting as a cell adhesion molecule at the postsynaptic membrane, which associates with neurexin-alpha at the presynaptic membrane. The polypeptide is Calsyntenin-2 (Rattus norvegicus (Rat)).